Reading from the N-terminus, the 297-residue chain is CCAAT/enhancer-binding protein beta (297 aa).

The segment at 1-22 (MHRLLAWDAACLPPPPAAFRPM) is required for Lys-134 sumoylation. R3 bears the Asymmetric dimethylarginine; by CARM1 mark. The interval 22–105 (MEVANFYYEP…YGAKPSKKPS (84 aa)) is required for MYC transcriptional repression. At K39 the chain carries N6-acetyllysine; alternate. K39 is modified (N6-methylated lysine; alternate). K99 and K102 each carry N6-acetyllysine; by KAT2A and KAT2B. K103 is modified (N6-acetyllysine; by KAT2A and KAT2B; alternate). Residue K103 forms a Glycyl lysine isopeptide (Lys-Gly) (interchain with G-Cter in SUMO2); alternate linkage. A Phosphoserine; by RPS6KA1 and PKC/PRKCA modification is found at S105. Residue K134 forms a Glycyl lysine isopeptide (Lys-Gly) (interchain with G-Cter in SUMO2); alternate linkage. K134 is covalently cross-linked (Glycyl lysine isopeptide (Lys-Gly) (interchain with G-Cter in SUMO); alternate). K145 participates in a covalent cross-link: Glycyl lysine isopeptide (Lys-Gly) (interchain with G-Cter in SUMO2). Residues 172–201 (SGSSGSLSTSSSSSPPGTPSPADAKAAPAA) are disordered. T180 bears the Phosphothreonine; by GSK3-beta mark. O-linked (GlcNAc) serine glycosylation is found at S181 and S182. At S185 the chain carries Phosphoserine; by GSK3-beta. T189 carries the post-translational modification Phosphothreonine; by RPS6KA1, CDK2 and MAPK. Glycyl lysine isopeptide (Lys-Gly) (interchain with G-Cter in SUMO2) cross-links involve residues K212 and K214. A bZIP domain is found at 223-286 (SDEYKMRRER…STLRNLFKQL (64 aa)). A basic motif region spans residues 227–247 (KMRRERNNIAVRKSRDKAKMR). S240 bears the Phosphoserine; by PKC/PRKCA mark. The interval 249–256 (LETQHKVL) is leucine-zipper. At S277 the chain carries Phosphoserine; by CaMK2. K284 is covalently cross-linked (Glycyl lysine isopeptide (Lys-Gly) (interchain with G-Cter in SUMO2)).

The protein belongs to the bZIP family. C/EBP subfamily. Binds DNA as a homodimer and as a heterodimer. Interacts with MYB; within the complex, MYB and CEBPB bind to different promoter regions. Interacts with ATF4. Binds DNA as a heterodimer with ATF4. Can form stable heterodimers with CEBPA, CEBPD, CEBPE and CEBPG. Interacts with SIX1. Isoform 2 and isoform 3 also form heterodimers. Interacts with TRIM28 and PTGES2. Interacts with PRDM16. Interacts with CCDC85B. Forms a complex with THOC5. Interacts with ZNF638; this interaction increases transcriptional activation. Interacts with CIDEA and CIDEC; these interactions increase transcriptional activation of a subset of CEBPB downstream target genes. Interacts with DDIT3/CHOP. Interacts with EP300; recruits EP300 to chromatin. Interacts with RORA; the interaction disrupts interaction with EP300. Interacts (not methylated) with MED23, MED26, SMARCA2, SMARCB1 and SMARCC1. Interacts with KAT2A and KAT2B. Interacts with ATF5; EP300 is required for ATF5 and CEBPB interaction and DNA binding. Interacts with NFE2L1; the heterodimer represses expression of DSPP during odontoblast differentiation. Post-translationally, phosphorylated at Thr-189 by MAPK and CDK2, serves to prime phosphorylation at Thr-180 and Ser-185 by GSK3B and acquire DNA-binding as well as transactivation activities, required to induce adipogenesis. MAPK and CDK2 act sequentially to maintain Thr-189 in the primed phosphorylated state during mitotical cloning expansion and thereby progression of terminal differentiation. Phosphorylation at Ser-105 enhances transactivation activity. Phosphorylation at Ser-277 in response to calcium increases transactivation activity. Phosphorylated at Thr-189 by RPS6KA1. Methylated. Methylation at Arg-3 by CARM1 and at Lys-39 by EHMT2 inhibit transactivation activity. Methylation is probably inhibited by phosphorylation at Thr-189. In terms of processing, sumoylated by polymeric chains of SUMO2 or SUMO3. Sumoylation at Lys-134 is required for inhibition of T-cells proliferation. In adipocytes, sumoylation at Lys-134 by PIAS1 leads to ubiquitination and subsequent proteasomal degradation. Desumoylated by SENP2, which abolishes ubiquitination and stabilizes protein levels. Post-translationally, ubiquitinated, leading to proteasomal degradation. O-glycosylated, glycosylation at Ser-181 and Ser-182 prevents phosphorylation on Thr-189, Ser-185 and Thr-180 and DNA binding activity which delays the adipocyte differentiation program. In terms of processing, acetylated. Acetylation at Lys-39 is an important and dynamic regulatory event that contributes to its ability to transactivate target genes, including those associated with adipogenesis and adipocyte function. Deacetylation by HDAC1 represses its transactivation activity. Acetylated by KAT2A and KAT2B within a cluster of lysine residues between amino acids 99-103, this acetylation is strongly induced by glucocorticoid treatment and enhances transactivation activity. As to expression, liver and lung.

The protein resides in the nucleus. Its subcellular location is the cytoplasm. In terms of biological role, important transcription factor regulating the expression of genes involved in immune and inflammatory responses. Also plays a significant role in adipogenesis, as well as in the gluconeogenic pathway, liver regeneration, and hematopoiesis. The consensus recognition site is 5'-T[TG]NNGNAA[TG]-3'. Its functional capacity is governed by protein interactions and post-translational protein modifications. During early embryogenesis, plays essential and redundant roles with CEBPA. Has a promitotic effect on many cell types such as hepatocytes and adipocytes but has an antiproliferative effect on T-cells by repressing MYC expression, facilitating differentiation along the T-helper 2 lineage. Binds to regulatory regions of several acute-phase and cytokines genes and plays a role in the regulation of acute-phase reaction and inflammation. Also plays a role in intracellular bacteria killing. During adipogenesis, is rapidly expressed and, after activation by phosphorylation, induces CEBPA and PPARG, which turn on the series of adipocyte genes that give rise to the adipocyte phenotype. The delayed transactivation of the CEBPA and PPARG genes by CEBPB appears necessary to allow mitotic clonal expansion and thereby progression of terminal differentiation. Essential for female reproduction because of a critical role in ovarian follicle development. Restricts osteoclastogenesis: together with NFE2L1; represses expression of DSPP during odontoblast differentiation. Functionally, essential for gene expression induction in activated macrophages. Plays a major role in immune responses such as CD4(+) T-cell response, granuloma formation and endotoxin shock. Not essential for intracellular bacteria killing. Its function is as follows. Acts as a dominant negative through heterodimerization with isoform 2. Promotes osteoblast differentiation and osteoclastogenesis. This chain is CCAAT/enhancer-binding protein beta, found in Rattus norvegicus (Rat).